The chain runs to 181 residues: Probable calcium-binding protein CML43 (181 aa).

3 consecutive EF-hand domains span residues 24 to 59, 107 to 142, and 145 to 180; these read LNAL…LGLD, SPES…LGLP, and GEIE…VVVP. The Ca(2+) site is built by aspartate 37, asparagine 39, aspartate 41, glutamate 48, aspartate 120, aspartate 122, aspartate 124, glutamate 131, aspartate 158, asparagine 160, aspartate 162, arginine 164, and glutamate 169.

As to expression, expressed specifically in roots.

Its function is as follows. Calcium-binding protein that may mediate calcium-dependent signal during plant defense response. The sequence is that of Probable calcium-binding protein CML43 (CML43) from Arabidopsis thaliana (Mouse-ear cress).